We begin with the raw amino-acid sequence, 160 residues long: MTNLTLDVNIIDFPSIPVAMLPHRCSPELLNYSVAKFIMWRKETGLSPVNQSQTFGVAWDDPATTAPEAFRFDICGSVSEPIPDNRYGVSNGELTGGRYAVARHVGELDDISHTVWGIIRHWLPASGEKMRKAPILFHYTNLAEGVTEQRLETDVYVPLA.

In terms of biological role, represses expression of mcbR. The sequence is that of Probable transcriptional regulator YgiV (ygiV) from Escherichia coli (strain K12).